A 429-amino-acid polypeptide reads, in one-letter code: Adenylosuccinate synthetase (429 aa).

Residues Gly-13–Lys-19 and Gly-41–Thr-43 contribute to the GTP site. Asp-14 serves as the catalytic Proton acceptor. The Mg(2+) site is built by Asp-14 and Gly-41. IMP-binding positions include Asp-14 to Lys-17, Asn-39 to His-42, Thr-130, Arg-144, Gln-225, Thr-240, and Arg-304. Residue His-42 is the Proton donor of the active site. Residue Ala-300–Arg-306 coordinates substrate. Residues Arg-306, Lys-332–Asp-334, and Ser-414–Gly-416 contribute to the GTP site.

The protein belongs to the adenylosuccinate synthetase family. As to quaternary structure, homodimer. Mg(2+) is required as a cofactor.

Its subcellular location is the cytoplasm. It carries out the reaction IMP + L-aspartate + GTP = N(6)-(1,2-dicarboxyethyl)-AMP + GDP + phosphate + 2 H(+). It functions in the pathway purine metabolism; AMP biosynthesis via de novo pathway; AMP from IMP: step 1/2. In terms of biological role, plays an important role in the de novo pathway of purine nucleotide biosynthesis. Catalyzes the first committed step in the biosynthesis of AMP from IMP. The protein is Adenylosuccinate synthetase of Acidithiobacillus ferrooxidans (Thiobacillus ferrooxidans).